The following is a 306-amino-acid chain: Ribosomal protein L11 methyltransferase (306 aa).

S-adenosyl-L-methionine is bound by residues Thr139, Gly173, Asp195, and Asn242.

The protein belongs to the methyltransferase superfamily. PrmA family.

Its subcellular location is the cytoplasm. It catalyses the reaction L-lysyl-[protein] + 3 S-adenosyl-L-methionine = N(6),N(6),N(6)-trimethyl-L-lysyl-[protein] + 3 S-adenosyl-L-homocysteine + 3 H(+). Its function is as follows. Methylates ribosomal protein L11. This Trichormus variabilis (strain ATCC 29413 / PCC 7937) (Anabaena variabilis) protein is Ribosomal protein L11 methyltransferase.